Here is a 259-residue protein sequence, read N- to C-terminus: Global transcriptional regulator CodY (259 aa).

The tract at residues 1–155 (MNLLEKTRKI…GATVVGMEIL (155 aa)) is GAF domain. The H-T-H motif DNA-binding region spans 203 to 222 (ASKIADRVGITRSVIVNALR). Ser-215 carries the phosphoserine modification.

It belongs to the CodY family.

It is found in the cytoplasm. DNA-binding global transcriptional regulator which is involved in the adaptive response to starvation and acts by directly or indirectly controlling the expression of numerous genes in response to nutrient availability. During rapid exponential growth, CodY is highly active and represses genes whose products allow adaptation to nutrient depletion. The chain is Global transcriptional regulator CodY from Geobacillus kaustophilus (strain HTA426).